The primary structure comprises 163 residues: uncharacterized protein (163 aa).

This is an uncharacterized protein from Haemophilus phage HP1 (strain HP1c1) (Bacteriophage HP1).